Here is a 457-residue protein sequence, read N- to C-terminus: MVIQRNSILLLIIIFASSISTCRSNVIDDNLFKQVYDNILEQEFAHDFQAYLSYLSKNIESNNNIDKVDKNGIKVINVLSFGAKGDGKTYDNIAFEQAWNEACSSRTPVQFVVPKNKNYLLKQITFSGPCRSSISVKIFGSLEASSKISDYKDRRLWIAFDSVQNLVVGGGGTINGNGQVWWPSSCKINKSLPCRDAPTALTFWNCKNLKVNNLKSKNAQQIHIKFESCTNVVASNLMINASAKSPNTDGVHVSNTQYIQISDTIIGTGDDCISIVSGSQNVQATNITCGPGHGISIGSLGSGNSEAYVSNVTVNEAKIIGAENGVRIKTWQGGSGQASNIKFLNVEMQDVKYPIIIDQNYCDRVEPCIQQFSAVQVKNVVYENIKGTSATKVAIKFDCSTNFPCEGIIMENINLVGESGKPSEATCKNVHFNNAEHVTPHCTSLEISEDEALLYNY.

Positions 1-24 (MVIQRNSILLLIIIFASSISTCRS) are cleaved as a signal peptide. Residues 25 to 71 (NVIDDNLFKQVYDNILEQEFAHDFQAYLSYLSKNIESNNNIDKVDKN) constitute a propeptide that is removed on maturation. N-linked (GlcNAc...) asparagine glycosylation is found at N189 and N240. PbH1 repeat units lie at residues 228–255 (SCTN…HVSN) and 256–277 (TQYI…SIVS). Residue D270 is the Proton donor of the active site. Residue N286 is glycosylated (N-linked (GlcNAc...) asparagine). The active site involves H293. PbH1 repeat units follow at residues 309–330 (VSNV…RIKT) and 338–359 (ASNI…IIDQ). An N-linked (GlcNAc...) asparagine glycan is attached at N311. Positions 445-457 (LEISEDEALLYNY) are excised as a propeptide.

This sequence belongs to the glycosyl hydrolase 28 family. In terms of assembly, monomer PG2 (isoenzymes PG2A and PG2B). Also forms heterodimers called polygalacturonase 1 (PG1) with the beta subunit GP1. In terms of processing, N-glycosylated. PG2B isozyme has a greater degree of glycosylation than PG2A. In terms of tissue distribution, expressed only in ripening fruits (at protein level).

The protein localises to the secreted. The protein resides in the extracellular space. It is found in the apoplast. It localises to the cell wall. The catalysed reaction is (1,4-alpha-D-galacturonosyl)n+m + H2O = (1,4-alpha-D-galacturonosyl)n + (1,4-alpha-D-galacturonosyl)m.. Catalytic subunit of the polygalacturonase isozyme 1 and 2 (PG1 and PG2). Acts in concert with the pectinesterase, in the ripening process. Is involved in cell wall metabolism, specifically in polyuronide degradation. The depolymerization and solubilization of cell wall polyuronides mediated by PG2 during ripening seems to be limited by the beta subunit GP1, probably by recruiting PG2 to form PG1. In Solanum lycopersicum (Tomato), this protein is Polygalacturonase-2 (PG2).